The following is a 426-amino-acid chain: Dihydroorotase (426 aa).

2 residues coordinate Zn(2+): histidine 58 and histidine 60. Residues 60 to 62 and asparagine 92 contribute to the substrate site; that span reads HLR. Residues aspartate 150, histidine 177, and histidine 230 each contribute to the Zn(2+) site. Asparagine 276 is a substrate binding site. Aspartate 303 lines the Zn(2+) pocket. Aspartate 303 is an active-site residue. Substrate is bound by residues histidine 307 and 321–322; that span reads FG.

The protein belongs to the metallo-dependent hydrolases superfamily. DHOase family. Class I DHOase subfamily. Zn(2+) is required as a cofactor.

It catalyses the reaction (S)-dihydroorotate + H2O = N-carbamoyl-L-aspartate + H(+). The protein operates within pyrimidine metabolism; UMP biosynthesis via de novo pathway; (S)-dihydroorotate from bicarbonate: step 3/3. In terms of biological role, catalyzes the reversible cyclization of carbamoyl aspartate to dihydroorotate. The chain is Dihydroorotase from Listeria welshimeri serovar 6b (strain ATCC 35897 / DSM 20650 / CCUG 15529 / CIP 8149 / NCTC 11857 / SLCC 5334 / V8).